The primary structure comprises 156 residues: Ribonuclease pancreatic (156 aa).

An N-terminal signal peptide occupies residues 1–28 (MALEKSLALLPLLVLVLLVLGWVQPSLG). A compositionally biased stretch (basic and acidic residues) spans 33 to 43 (AKKFQRQHMDS). Positions 33 to 52 (AKKFQRQHMDSDGSPSSNPT) are disordered. Substrate contacts are provided by Lys-35 and Arg-38. His-40 functions as the Proton acceptor in the catalytic mechanism. Intrachain disulfides connect Cys-54–Cys-112, Cys-68–Cys-123, Cys-86–Cys-138, and Cys-93–Cys-100. An N-linked (GlcNAc...) asparagine glycan is attached at Asn-62. Substrate is bound by residues 69–73 (KPVNT), Lys-94, and Arg-113. Asn-116 carries N-linked (GlcNAc...) asparagine glycosylation. His-147 functions as the Proton donor in the catalytic mechanism.

It belongs to the pancreatic ribonuclease family. In terms of assembly, monomer. Interacts with and forms tight 1:1 complexes with RNH1. Dimerization of two such complexes may occur. Interaction with RNH1 inhibits this protein.

The protein resides in the secreted. The enzyme catalyses an [RNA] containing cytidine + H2O = an [RNA]-3'-cytidine-3'-phosphate + a 5'-hydroxy-ribonucleotide-3'-[RNA].. It catalyses the reaction an [RNA] containing uridine + H2O = an [RNA]-3'-uridine-3'-phosphate + a 5'-hydroxy-ribonucleotide-3'-[RNA].. In terms of biological role, endonuclease that catalyzes the cleavage of RNA on the 3' side of pyrimidine nucleotides. Acts on single-stranded and double-stranded RNA. The polypeptide is Ribonuclease pancreatic (RNASE1) (Saimiri sciureus (Common squirrel monkey)).